Here is a 351-residue protein sequence, read N- to C-terminus: 1-acylglycerol-3-phosphate O-acyltransferase ABHD5 (351 aa).

The 106-residue stretch at 79–184 (PLVLLHGFGG…LILVEPWGFP (106 aa)) folds into the AB hydrolase-1 domain. Ser124 is subject to Phosphoserine. An HXXXXD motif motif is present at residues 329-334 (HYVYAD).

It belongs to the peptidase S33 family. ABHD4/ABHD5 subfamily. Interacts with ADRP and PLIN. Interacts with PNPLA2. Interacts with PLIN5; promotes interaction with PNPLA2.

It is found in the cytoplasm. Its subcellular location is the lipid droplet. The enzyme catalyses a 1-acyl-sn-glycero-3-phosphate + an acyl-CoA = a 1,2-diacyl-sn-glycero-3-phosphate + CoA. It carries out the reaction 1-(9Z-octadecenoyl)-sn-glycero-3-phosphate + (9Z)-octadecenoyl-CoA = 1,2-di-(9Z-octadecenoyl)-sn-glycero-3-phosphate + CoA. The catalysed reaction is 1-(9Z-octadecenoyl)-sn-glycero-3-phosphate + hexadecanoyl-CoA = 1-(9Z)-octadecenoyl-2-hexadecanoyl-sn-glycero-3-phosphate + CoA. It catalyses the reaction 1-(9Z-octadecenoyl)-sn-glycero-3-phosphate + octadecanoyl-CoA = 1-(9Z-octadecenoyl)-2-octadecanoyl-sn-glycero-3-phosphate + CoA. The enzyme catalyses 1-(9Z-octadecenoyl)-sn-glycero-3-phosphate + (5Z,8Z,11Z,14Z)-eicosatetraenoyl-CoA = 1-(9Z)-octadecenoyl-2-(5Z,8Z,11Z,14Z)-eicosatetraenoyl-sn-glycero-3-phosphate + CoA. It carries out the reaction eicosanoyl-CoA + 1-(9Z-octadecenoyl)-sn-glycero-3-phosphate = 1-(9Z)-octadecenoyl-2-eicosanoyl-sn-glycero-3-phosphate + CoA. The catalysed reaction is 1-hexadecanoyl-sn-glycero-3-phosphate + (9Z)-octadecenoyl-CoA = 1-hexadecanoyl-2-(9Z-octadecenoyl)-sn-glycero-3-phosphate + CoA. It catalyses the reaction 1-octadecanoyl-sn-glycero-3-phosphate + (9Z)-octadecenoyl-CoA = 1-octadecanoyl-2-(9Z-octadecenoyl)-sn-glycero-3-phosphate + CoA. The enzyme catalyses 1-(5Z,8Z,11Z,14Z-eicosatetraenoyl)-sn-glycero-3-phosphate + (9Z)-octadecenoyl-CoA = 1-(5Z,8Z,11Z,14Z)-eicosatetraenoyl-2-(9Z)-octadecenoyl-sn-glycero-3-phosphate + CoA. With respect to regulation, acyltransferase activity is inhibited by detergents such as Triton X-100 and 3-[(3-cholamidopropyl)dimethylammonio]-1-propanesulfonate (CHAPS). Acyltransferase activity is inhibited by the presence of magnesium and calcium. Its function is as follows. Coenzyme A-dependent lysophosphatidic acid acyltransferase that catalyzes the transfer of an acyl group on a lysophosphatidic acid. Functions preferentially with 1-oleoyl-lysophosphatidic acid followed by 1-palmitoyl-lysophosphatidic acid, 1-stearoyl-lysophosphatidic acid and 1-arachidonoyl-lysophosphatidic acid as lipid acceptor. Functions preferentially with arachidonoyl-CoA followed by oleoyl-CoA as acyl group donors. Functions in phosphatidic acid biosynthesis. May regulate the cellular storage of triacylglycerol through activation of the phospholipase PNPLA2. Involved in keratinocyte differentiation. Regulates lipid droplet fusion. The chain is 1-acylglycerol-3-phosphate O-acyltransferase ABHD5 from Rattus norvegicus (Rat).